The following is a 31-amino-acid chain: Hemocyanin subunit 1 (31 aa).

This sequence belongs to the tyrosinase family. Hemocyanin subfamily. As to expression, hemolymph.

It localises to the secreted. The protein resides in the extracellular space. Hemocyanins are copper-containing oxygen carriers occurring freely dissolved in the hemolymph of many mollusks and arthropods. This Homarus americanus (American lobster) protein is Hemocyanin subunit 1.